A 368-amino-acid polypeptide reads, in one-letter code: Histidinol-phosphate aminotransferase (368 aa).

Lysine 215 is modified (N6-(pyridoxal phosphate)lysine).

The protein belongs to the class-II pyridoxal-phosphate-dependent aminotransferase family. Histidinol-phosphate aminotransferase subfamily. Homodimer. Requires pyridoxal 5'-phosphate as cofactor.

It carries out the reaction L-histidinol phosphate + 2-oxoglutarate = 3-(imidazol-4-yl)-2-oxopropyl phosphate + L-glutamate. It participates in amino-acid biosynthesis; L-histidine biosynthesis; L-histidine from 5-phospho-alpha-D-ribose 1-diphosphate: step 7/9. In Buchnera aphidicola subsp. Acyrthosiphon pisum (strain 5A), this protein is Histidinol-phosphate aminotransferase.